Consider the following 381-residue polypeptide: Sulfate adenylyltransferase (381 aa).

Belongs to the sulfate adenylyltransferase family.

It catalyses the reaction sulfate + ATP + H(+) = adenosine 5'-phosphosulfate + diphosphate. It participates in sulfur metabolism; hydrogen sulfide biosynthesis; sulfite from sulfate: step 1/3. This chain is Sulfate adenylyltransferase, found in Chloroflexus aurantiacus (strain ATCC 29366 / DSM 635 / J-10-fl).